Consider the following 261-residue polypeptide: Chanoclavine-I dehydrogenase ifgE (261 aa).

The signal sequence occupies residues 1-20 (MASVKSRVFAITGGASGIGA). Positions 18, 48, 66, 132, 166, 170, and 201 each coordinate NADP(+). Tyrosine 166 serves as the catalytic Proton acceptor. The active-site Lowers pKa of active site Tyr is lysine 170.

This sequence belongs to the short-chain dehydrogenases/reductases (SDR) family.

The protein operates within alkaloid biosynthesis; ergot alkaloid biosynthesis. In terms of biological role, chanoclavine-I dehydrogenase; part of the gene cluster that mediates the biosynthesis of isofumigaclavines, fungal ergot alkaloids. The tryptophan dimethylallyltransferase ifgA catalyzes the first step of ergot alkaloid biosynthesis by condensing dimethylallyl diphosphate (DMAP) and tryptophan to form 4-dimethylallyl-L-tryptophan. The second step is catalyzed by the methyltransferase ifgB that methylates 4-dimethylallyl-L-tryptophan in the presence of S-adenosyl-L-methionine, resulting in the formation of N-methyl-dimethylallyl-L-tryptophan. The catalase ifgD and the FAD-dependent oxidoreductase ifgC then transform N-methyl-dimethylallyl-L-tryptophan to chanoclavine-I which is further oxidized by ifgE in the presence of NAD(+), resulting in the formation of chanoclavine-I aldehyde. The chanoclavine-I aldehyde reductases ifgG and/or fgaOx3 reduce chanoclavine-I aldehyde to dihydrochanoclavine-I aldehyde that spontaneously dehydrates to form 6,8-dimethyl-6,7-didehydroergoline. The festuclavine dehydrogenases ifgF1 and/or ifgF2 then catalyze the reduction of 6,8-dimethyl-6,7-didehydroergoline to form festuclavine. Hydrolysis of festuclavine by a yet undetermined cytochrome P450 monooxygenase (called ifgH) then leads to the formation of isofumigaclavine B which is in turn acetylated by ifgI to isofumigaclavine A. Penicillium roqueforti has interestingly at least two sets of genes for the consumption of chanoclavine-I aldehyde on three different loci, the OYEs ifgG/fgaOx3 and the festuclavine synthase homologs ifgF1/ifgF2. The reason for the duplication of these genes is unclear, probably to ensure the conversion of chanoclavine-I aldehyde by differential gene expression under various environmental conditions. The polypeptide is Chanoclavine-I dehydrogenase ifgE (Penicillium roqueforti (strain FM164)).